A 132-amino-acid chain; its full sequence is Small ribosomal subunit protein uS8 (132 aa).

This sequence belongs to the universal ribosomal protein uS8 family. As to quaternary structure, part of the 30S ribosomal subunit. Contacts proteins S5 and S12.

One of the primary rRNA binding proteins, it binds directly to 16S rRNA central domain where it helps coordinate assembly of the platform of the 30S subunit. This is Small ribosomal subunit protein uS8 from Mycolicibacterium gilvum (strain PYR-GCK) (Mycobacterium gilvum (strain PYR-GCK)).